The chain runs to 49 residues: Large ribosomal subunit protein bL33B (49 aa).

The protein belongs to the bacterial ribosomal protein bL33 family.

The chain is Large ribosomal subunit protein bL33B from Bacillus velezensis (strain DSM 23117 / BGSC 10A6 / LMG 26770 / FZB42) (Bacillus amyloliquefaciens subsp. plantarum).